A 418-amino-acid chain; its full sequence is MTYLEIDGVEKLSGEVIISGAKNAALPLIASSILAKNEAQISNLPNVADICTLLSLLKNLGASYTFENNFAKINTKDLNKTIAKYDIVRKMRASILTLGPLLARFGNCEVSLPGGCAIGQRPIDLHLLALEKMGANIEIKQGYVVASGKLKGADLMFDKITVTGSENIIMAAALAHGKTRLLNVAKEPEVVQLCEVLAEAGLDIKGVGSDELEIYGTSGELLEFKPFKIIPDRIEAGTYLCAGAITNSKITLKNVNANHLGAVLAKLEQMGFSFDISEDSISINPAKEIKPVEILTSEYPGFPTDMQAQFMALALRANGVSIIDERLFENRFMHVSELLRMGADIRLNGHIATINGTKELFGADVMATDLRASSALILAALAAKGTSKIHRIYHLDRGYENLEEKFKNLGASIRRLEE.

22 to 23 lines the phosphoenolpyruvate pocket; sequence KN. Position 92 (R92) interacts with UDP-N-acetyl-alpha-D-glucosamine. C116 serves as the catalytic Proton donor. At C116 the chain carries 2-(S-cysteinyl)pyruvic acid O-phosphothioketal. UDP-N-acetyl-alpha-D-glucosamine-binding positions include 121–125, D305, and L327; that span reads RPIDL.

The protein belongs to the EPSP synthase family. MurA subfamily.

The protein resides in the cytoplasm. It catalyses the reaction phosphoenolpyruvate + UDP-N-acetyl-alpha-D-glucosamine = UDP-N-acetyl-3-O-(1-carboxyvinyl)-alpha-D-glucosamine + phosphate. It participates in cell wall biogenesis; peptidoglycan biosynthesis. In terms of biological role, cell wall formation. Adds enolpyruvyl to UDP-N-acetylglucosamine. In Campylobacter lari (strain RM2100 / D67 / ATCC BAA-1060), this protein is UDP-N-acetylglucosamine 1-carboxyvinyltransferase.